The following is a 168-amino-acid chain: Photosystem I assembly protein Ycf3 (168 aa).

3 TPR repeats span residues 35–68 (AFTY…EIDP), 72–105 (SYIL…NPFL), and 120–153 (GEQA…TPGN).

It belongs to the Ycf3 family.

The protein localises to the plastid. The protein resides in the chloroplast thylakoid membrane. Its function is as follows. Essential for the assembly of the photosystem I (PSI) complex. May act as a chaperone-like factor to guide the assembly of the PSI subunits. The protein is Photosystem I assembly protein Ycf3 of Lactuca sativa (Garden lettuce).